The following is a 276-amino-acid chain: Shikimate dehydrogenase (NADP(+)) (276 aa).

Shikimate-binding positions include 20–22 (SRS) and T67. K71 (proton acceptor) is an active-site residue. D83 serves as a coordination point for NADP(+). Positions 92 and 107 each coordinate shikimate. Residues 131-135 (GAGGA) and I217 each bind NADP(+). Position 219 (Y219) interacts with shikimate. NADP(+) is bound at residue G240.

It belongs to the shikimate dehydrogenase family. Homodimer.

The catalysed reaction is shikimate + NADP(+) = 3-dehydroshikimate + NADPH + H(+). Its pathway is metabolic intermediate biosynthesis; chorismate biosynthesis; chorismate from D-erythrose 4-phosphate and phosphoenolpyruvate: step 4/7. In terms of biological role, involved in the biosynthesis of the chorismate, which leads to the biosynthesis of aromatic amino acids. Catalyzes the reversible NADPH linked reduction of 3-dehydroshikimate (DHSA) to yield shikimate (SA). The chain is Shikimate dehydrogenase (NADP(+)) from Acidiphilium cryptum (strain JF-5).